The sequence spans 233 residues: Sugar fermentation stimulation protein homolog (233 aa).

The protein belongs to the SfsA family.

This Rhodospirillum centenum (strain ATCC 51521 / SW) protein is Sugar fermentation stimulation protein homolog.